The sequence spans 513 residues: Lysine--tRNA ligase (513 aa).

E422 and E429 together coordinate Mg(2+).

Belongs to the class-II aminoacyl-tRNA synthetase family. In terms of assembly, homodimer. Requires Mg(2+) as cofactor.

It localises to the cytoplasm. It catalyses the reaction tRNA(Lys) + L-lysine + ATP = L-lysyl-tRNA(Lys) + AMP + diphosphate. In Tolumonas auensis (strain DSM 9187 / NBRC 110442 / TA 4), this protein is Lysine--tRNA ligase.